The chain runs to 390 residues: Substance-K receptor (390 aa).

Residues 1–32 (MGTRAIVSDANILSGLESNATGVTAFSMPGWQ) are Extracellular-facing. N19 carries N-linked (GlcNAc...) asparagine glycosylation. Residues 33–56 (LALWATAYLALVLVAVTGNATVIW) form a helical membrane-spanning segment. Topologically, residues 57 to 69 (IILAHERMRTVTN) are cytoplasmic. Residues 70–90 (YFIINLALADLCMAAFNATFN) form a helical membrane-spanning segment. Residues 91–107 (FIYASHNIWYFGRAFCY) are Extracellular-facing. Residues C106 and C181 are joined by a disulfide bond. A helical membrane pass occupies residues 108–129 (FQNLFPITAMFVSIYSMTAIAA). Over 130–149 (DRYMAIVHPFQPRLSAPSTK) the chain is Cytoplasmic. A helical membrane pass occupies residues 150–170 (AIIAGIWLVALALASPQCFYS). Residues 171 to 196 (TITVDEGATKCVVAWPNDNGGKMLLL) are Extracellular-facing. Residues 197–218 (YHLVVFVLIYFLPLLVMFGAYS) traverse the membrane as a helical segment. The Cytoplasmic segment spans residues 219–251 (VIGLTLWKRAVPRHQAHGANLRHLQAKKKFVKA). A helical transmembrane segment spans residues 252–272 (MVLVVLTFAICWLPYHLYFIL). The Extracellular portion of the chain corresponds to 273–290 (GTFQEDIYYHKFIQQVYL). Residues 291–310 (ALFWLAMSSTMYNPIIYCCL) form a helical membrane-spanning segment. Residues 311–390 (NHRFRSGFRL…PAGPICKAQA (80 aa)) are Cytoplasmic-facing. C324 is lipidated: S-palmitoyl cysteine. Residues 365–390 (HSEATNGQVGSPQDGEPAGPICKAQA) form a disordered region. Positions 366–375 (SEATNGQVGS) are enriched in polar residues.

This sequence belongs to the G-protein coupled receptor 1 family.

It is found in the cell membrane. Functionally, this is a receptor for the tachykinin neuropeptide substance K (neurokinin A). It is associated with G proteins that activate a phosphatidylinositol-calcium second messenger system. The rank order of affinity of this receptor to tachykinins is: substance K &gt; neuromedin-K &gt; substance P. This Rattus norvegicus (Rat) protein is Substance-K receptor (Tacr2).